The primary structure comprises 284 residues: Tropomyosin alpha-1 chain (284 aa).

The disordered stretch occupies residues 1-40 (MDAIKKKMQMLKLDKENALDRAEQAEADKKGAEDKSKQLE). Positions 1–284 (MDAIKKKMQM…DHALNDMTSI (284 aa)) form a coiled coil. Basic and acidic residues predominate over residues 12–40 (KLDKENALDRAEQAEADKKGAEDKSKQLE).

The protein belongs to the tropomyosin family. In terms of assembly, homodimer. Heterodimer of an alpha (TPM1, TPM3 or TPM4) and a beta (TPM2) chain.

Its subcellular location is the cytoplasm. It is found in the cytoskeleton. In terms of biological role, binds to actin filaments in muscle and non-muscle cells. Plays a central role, in association with the troponin complex, in the calcium dependent regulation of vertebrate striated muscle contraction. Smooth muscle contraction is regulated by interaction with caldesmon. In non-muscle cells is implicated in stabilizing cytoskeleton actin filaments. This chain is Tropomyosin alpha-1 chain (tpm1), found in Rana temporaria (European common frog).